Reading from the N-terminus, the 157-residue chain is UPF0262 protein RL0614 (157 aa).

It belongs to the UPF0262 family.

The sequence is that of UPF0262 protein RL0614 from Rhizobium johnstonii (strain DSM 114642 / LMG 32736 / 3841) (Rhizobium leguminosarum bv. viciae).